Consider the following 169-residue polypeptide: Putative pre-16S rRNA nuclease (169 aa).

The span at methionine 1–arginine 19 shows a compositional bias: basic and acidic residues. The disordered stretch occupies residues methionine 1–glycine 24.

Belongs to the YqgF nuclease family.

It is found in the cytoplasm. Could be a nuclease involved in processing of the 5'-end of pre-16S rRNA. The polypeptide is Putative pre-16S rRNA nuclease (Mycobacterium sp. (strain KMS)).